Here is a 115-residue protein sequence, read N- to C-terminus: Protamine-2 (115 aa).

A disordered region spans residues 1–115; the sequence is MVRCHVKSPT…RRRRRCGRQL (115 aa). Serine 8 carries the post-translational modification Phosphoserine. Positions 24 to 38 are enriched in basic and acidic residues; it reads ETEHPDQARELRPED. Basic residues-rich tracts occupy residues 44 to 79 and 102 to 115; these read RTHR…RRRG and RRMR…GRQL.

The protein belongs to the protamine P2 family. Interacts with TDRP. Post-translationally, proteolytic processing into mature chains is required for histone eviction during spermatogenesis. Transition proteins (TNP1 and TNP2) are required for processing. As to expression, testis.

The protein localises to the nucleus. Its subcellular location is the chromosome. In terms of biological role, protamines substitute for histones in the chromatin of sperm during the haploid phase of spermatogenesis. They compact sperm DNA into a highly condensed, stable and inactive complex. This chain is Protamine-2 (PRM2), found in Bos taurus (Bovine).